A 586-amino-acid polypeptide reads, in one-letter code: Thioredoxin domain-containing protein 3 (586 aa).

Residues 10 to 116 form the Thioredoxin domain; it reads LQSVVNSQNL…NRKVITLIDE (107 aa). The cysteines at positions 39 and 42 are disulfide-linked. 3 NDK regions span residues 157–254, 312–452, and 453–586; these read MAII…VLEE, VQTT…STLA, and LIKP…NPEN.

It in the C-terminal section; belongs to the NDK family. In terms of assembly, monomer. As to expression, testis-specific. Expressed mainly in round spermatids.

It localises to the cytoplasm. Functionally, probably required during the final stages of sperm tail maturation in the testis and/or epididymis, where extensive disulfide bonding of fibrous sheath (FS) proteins occurs. In vitro, it has neither nucleoside diphosphate kinase (NDPK) activity nor reducing activity on disulfide bonds. Exhibits a 3'-5' exonuclease activity with a preference for single-stranded DNA, suggesting roles in DNA proofreading and repair. The protein is Thioredoxin domain-containing protein 3 (Nme8) of Mus musculus (Mouse).